The following is a 380-amino-acid chain: Putative S-(hydroxymethyl)glutathione dehydrogenase 2 (380 aa).

Cys-50 provides a ligand contact to Zn(2+). His-51 contributes to the NAD(+) binding site. Zn(2+)-binding residues include His-72, Glu-73, Cys-102, Cys-105, Cys-108, Cys-116, and Cys-179. Residues Gly-204 to Gly-209, Asp-228, and Ile-297 to Val-299 contribute to the NAD(+) site.

This sequence belongs to the zinc-containing alcohol dehydrogenase family. Class-III subfamily. Requires Zn(2+) as cofactor.

The catalysed reaction is a primary alcohol + NAD(+) = an aldehyde + NADH + H(+). The enzyme catalyses a secondary alcohol + NAD(+) = a ketone + NADH + H(+). It carries out the reaction S-(hydroxymethyl)glutathione + NADP(+) = S-formylglutathione + NADPH + H(+). It catalyses the reaction S-(hydroxymethyl)glutathione + NAD(+) = S-formylglutathione + NADH + H(+). The catalysed reaction is S-nitrosoglutathione + NADH + H(+) = S-(hydroxysulfenamide)glutathione + NAD(+). In terms of biological role, oxidizes long-chain alcohols and, in the presence of glutathione, is able to oxidize formaldehyde. Also acts as a S-nitroso-glutathione reductase by catalyzing the NADH-dependent reduction of S-nitrosoglutathione, thereby regulating protein S-nitrosylation. This chain is Putative S-(hydroxymethyl)glutathione dehydrogenase 2, found in Schizosaccharomyces pombe (strain 972 / ATCC 24843) (Fission yeast).